We begin with the raw amino-acid sequence, 458 residues long: Bifunctional protein GlmU (458 aa).

The tract at residues 1–232 is pyrophosphorylase; sequence MISPLSVIIL…TFEIEGVNNR (232 aa). UDP-N-acetyl-alpha-D-glucosamine contacts are provided by residues 10–13, Lys-24, Gln-79, 84–85, 106–108, Gly-142, Glu-157, Asn-172, and Asn-230; these read LAAG, GT, and YGD. Asp-108 is a Mg(2+) binding site. Asn-230 is a binding site for Mg(2+). The segment at 233-253 is linker; the sequence is QQLASLERTWQGKLVADLQEA. The segment at 254 to 458 is N-acetyltransferase; the sequence is GVQFADPTRV…KDNFQRPTKK (205 aa). Residues Arg-336 and Lys-354 each contribute to the UDP-N-acetyl-alpha-D-glucosamine site. The active-site Proton acceptor is the His-366. 2 residues coordinate UDP-N-acetyl-alpha-D-glucosamine: Tyr-369 and Asn-380. Acetyl-CoA-binding positions include Ala-383, 389–390, Ser-408, Ala-426, and Arg-443; that span reads NY.

This sequence in the N-terminal section; belongs to the N-acetylglucosamine-1-phosphate uridyltransferase family. The protein in the C-terminal section; belongs to the transferase hexapeptide repeat family. As to quaternary structure, homotrimer. The cofactor is Mg(2+).

It localises to the cytoplasm. The catalysed reaction is alpha-D-glucosamine 1-phosphate + acetyl-CoA = N-acetyl-alpha-D-glucosamine 1-phosphate + CoA + H(+). It carries out the reaction N-acetyl-alpha-D-glucosamine 1-phosphate + UTP + H(+) = UDP-N-acetyl-alpha-D-glucosamine + diphosphate. The protein operates within nucleotide-sugar biosynthesis; UDP-N-acetyl-alpha-D-glucosamine biosynthesis; N-acetyl-alpha-D-glucosamine 1-phosphate from alpha-D-glucosamine 6-phosphate (route II): step 2/2. It functions in the pathway nucleotide-sugar biosynthesis; UDP-N-acetyl-alpha-D-glucosamine biosynthesis; UDP-N-acetyl-alpha-D-glucosamine from N-acetyl-alpha-D-glucosamine 1-phosphate: step 1/1. It participates in bacterial outer membrane biogenesis; LPS lipid A biosynthesis. Functionally, catalyzes the last two sequential reactions in the de novo biosynthetic pathway for UDP-N-acetylglucosamine (UDP-GlcNAc). The C-terminal domain catalyzes the transfer of acetyl group from acetyl coenzyme A to glucosamine-1-phosphate (GlcN-1-P) to produce N-acetylglucosamine-1-phosphate (GlcNAc-1-P), which is converted into UDP-GlcNAc by the transfer of uridine 5-monophosphate (from uridine 5-triphosphate), a reaction catalyzed by the N-terminal domain. This chain is Bifunctional protein GlmU, found in Psychrobacter arcticus (strain DSM 17307 / VKM B-2377 / 273-4).